The primary structure comprises 418 residues: 6-methylpretetramide 4-monooxygenase (418 aa).

Residues 15 to 44 and 289 to 299 each bind FAD; these read DVCVVGGGPAGLTLALLMLRSGARVTLVER and WARDGLLLIGD.

The protein belongs to the PheA/TfdB FAD monooxygenase family. The cofactor is FAD.

The catalysed reaction is 6-methylpretetramide + NADPH + O2 + 2 H(+) = 4-hydroxy-6-methylpretetramide + NADP(+) + H2O. It functions in the pathway antibiotic biosynthesis; oxytetracycline biosynthesis. Its function is as follows. Involved in the biosynthesis of the tetracycline antibiotic, oxytetracycline. Catalyzes the C-4 hydroxylation of 6-methylpretetramide to yield the intermediate 4-hydroxyl-6-methylpretetramid, which is subsequently hydroxylated by OxyL to yield 4-keto-anhydrotetracycline. OxyE serves as the ancillary enzyme to assist OxyL in the hydroxylation of C-4. The chain is 6-methylpretetramide 4-monooxygenase from Streptomyces rimosus.